The chain runs to 671 residues: MSELEEDFAKILMLKEERIKELEKRLSEKEEEIQELKRKLHKCQSVLPVPSTHIGPRTTRAQGISAEPQTYRSFHDLRQAFRKFTKSERSKDLIKEAILDNDFMKNLELSQIQEIVDCMYPVEYGKDSCIIKEGDVGSLVYVMEDGKVEVTKEGVKLCTMGPGKVFGELAILYNCTRTATVKTLVNVKLWAIDRQCFQTIMMRTGLIKHTEYMEFLKSVPTFQSLPEEILSKLADVLEETHYENGEYIIRQGARGDTFFIISKGTVNVTREDSPSEDPVFLRTLGKGDWFGEKALQGEDVRTANVIAAEAVTCLVIDRDSFKHLIGGLDDVSNKAYEDAEAKAKYEAEAAFFANLKLSDFNIIDTLGVGGFGRVELVQLKSEESKTFAMKILKKRHIVDTRQQEHIRSEKQIMQGAHSDFIVRLYRTFKDSKYLYMLMEACLGGELWTILRDRGSFEDSTTRFYTACVVEAFAYLHSKGIIYRDLKPENLILDHRGYAKLVDFGFAKKIGFGKKTWTFCGTPEYVAPEIILNKGHDISADYWSLGILMYELLTGSPPFSGPDPMKTYNIILRGIDMIEFPKKIAKNAANLIKKLCRDNPSERLGNLKNGVKDIQKHKWFEGFNWEGLRKGTLTPPIIPSVASPTDTSNFDSFPEDNDEPPPDDNSGWDIDF.

Ser-2 is subject to N-acetylserine. The stretch at 2-59 (SELEEDFAKILMLKEERIKELEKRLSEKEEEIQELKRKLHKCQSVLPVPSTHIGPRTT) forms a coiled coil. The segment at 2–102 (SELEEDFAKI…LIKEAILDND (101 aa)) is required for dimerization. The tract at residues 9–44 (AKILMLKEERIKELEKRLSEKEEEIQELKRKLHKCQ) is leucine-zipper. Positions 50–75 (PSTHIGPRTTRAQGISAEPQTYRSFH) are autoinhibitory domain. Position 59 is a phosphothreonine; by autocatalysis (Thr-59). Residues 103–220 (FMKNLELSQI…EYMEFLKSVP (118 aa)) form a cGMP-binding, high affinity region. 3',5'-cyclic AMP contacts are provided by residues 167 to 170 (GELA) and 177 to 178 (RT). Residues 167–170 (GELA), 177–178 (RT), Arg-282, 291–294 (GEKA), 301–302 (RT), and Tyr-336 each bind 3',5'-cyclic GMP. The tract at residues 221–341 (TFQSLPEEIL…SNKAYEDAEA (121 aa)) is cGMP-binding, low affinity. 3',5'-cyclic AMP is bound by residues 291 to 294 (GEKA), 301 to 302 (RT), and Tyr-336. The Protein kinase domain occupies 360-619 (FNIIDTLGVG…VKDIQKHKWF (260 aa)). ATP-binding positions include 366–374 (LGVGGFGRV) and Lys-390. Asp-484 functions as the Proton acceptor in the catalytic mechanism. Thr-515 carries the post-translational modification Phosphothreonine. One can recognise an AGC-kinase C-terminal domain in the interval 620–671 (EGFNWEGLRKGTLTPPIIPSVASPTDTSNFDSFPEDNDEPPPDDNSGWDIDF). The interval 635-671 (PIIPSVASPTDTSNFDSFPEDNDEPPPDDNSGWDIDF) is disordered. A compositionally biased stretch (acidic residues) spans 652–661 (FPEDNDEPPP).

This sequence belongs to the protein kinase superfamily. AGC Ser/Thr protein kinase family. cGMP subfamily. Isoform alpha: parallel homodimer or heterodimer and also heterotetramer. Interacts directly with PPP1R12A. Non-covalent dimer of dimer of PRKG1-PRKG1 and PPP1R12A-PPP1R12A. This interaction targets PRKG1 to stress fibers to mediate smooth muscle cell relaxation and vasodilation in responses to rises in cGMP. Isoform beta: antiparallel homodimer. Part of cGMP kinase signaling complex at least composed of ACTA2/alpha-actin, CNN1/calponin H1, PLN/phospholamban, PRKG1 and ITPR1. Interacts with IRAG1. Forms a stable complex with ITPR1, IRAG1, and isoform beta of PRKG1. Interacts with TRPC7 (via ankyrin repeat domain). Isoform alpha interacts with RGS2. Interacts with GTF2I. In terms of processing, autophosphorylation increases kinase activity. 65 kDa monomer is produced by proteolytic cleavage. As to expression, primarily expressed in lung and placenta.

It is found in the cytoplasm. The catalysed reaction is L-seryl-[protein] + ATP = O-phospho-L-seryl-[protein] + ADP + H(+). The enzyme catalyses L-threonyl-[protein] + ATP = O-phospho-L-threonyl-[protein] + ADP + H(+). With respect to regulation, in the absence of cGMP, PRKG1 activity is suppressed by autoinhibitory contacts. Serine/threonine protein kinase that acts as a key mediator of the nitric oxide (NO)/cGMP signaling pathway. GMP binding activates PRKG1, which phosphorylates serines and threonines on many cellular proteins. Numerous protein targets for PRKG1 phosphorylation are implicated in modulating cellular calcium, but the contribution of each of these targets may vary substantially among cell types. Proteins that are phosphorylated by PRKG1 regulate platelet activation and adhesion, smooth muscle contraction, cardiac function, gene expression, feedback of the NO-signaling pathway, and other processes involved in several aspects of the CNS like axon guidance, hippocampal and cerebellar learning, circadian rhythm and nociception. Smooth muscle relaxation is mediated through lowering of intracellular free calcium, by desensitization of contractile proteins to calcium, and by decrease in the contractile state of smooth muscle or in platelet activation. Regulates intracellular calcium levels via several pathways: phosphorylates IRAG1 and inhibits IP3-induced Ca(2+) release from intracellular stores, phosphorylation of KCNMA1 (BKCa) channels decreases intracellular Ca(2+) levels, which leads to increased opening of this channel. PRKG1 phosphorylates the canonical transient receptor potential channel (TRPC) family which inactivates the associated inward calcium current. Another mode of action of NO/cGMP/PKGI signaling involves PKGI-mediated inactivation of the Ras homolog gene family member A (RhoA). Phosphorylation of RHOA by PRKG1 blocks the action of this protein in myriad processes: regulation of RHOA translocation; decreasing contraction; controlling vesicle trafficking, reduction of myosin light chain phosphorylation resulting in vasorelaxation. Activation of PRKG1 by NO signaling also alters gene expression in a number of tissues. In smooth muscle cells, increased cGMP and PRKG1 activity influence expression of smooth muscle-specific contractile proteins, levels of proteins in the NO/cGMP signaling pathway, down-regulation of the matrix proteins osteopontin and thrombospondin-1 to limit smooth muscle cell migration and phenotype. Regulates vasodilator-stimulated phosphoprotein (VASP) functions in platelets and smooth muscle. The chain is cGMP-dependent protein kinase 1 (PRKG1) from Homo sapiens (Human).